We begin with the raw amino-acid sequence, 342 residues long: N-acetyl-gamma-glutamyl-phosphate reductase (342 aa).

C149 is a catalytic residue.

The protein belongs to the NAGSA dehydrogenase family. Type 1 subfamily.

Its subcellular location is the cytoplasm. The catalysed reaction is N-acetyl-L-glutamate 5-semialdehyde + phosphate + NADP(+) = N-acetyl-L-glutamyl 5-phosphate + NADPH + H(+). Its pathway is amino-acid biosynthesis; L-arginine biosynthesis; N(2)-acetyl-L-ornithine from L-glutamate: step 3/4. In terms of biological role, catalyzes the NADPH-dependent reduction of N-acetyl-5-glutamyl phosphate to yield N-acetyl-L-glutamate 5-semialdehyde. The sequence is that of N-acetyl-gamma-glutamyl-phosphate reductase from Thiobacillus denitrificans (strain ATCC 25259 / T1).